A 397-amino-acid polypeptide reads, in one-letter code: MSIENTDVHPEGYDDYVTFLKRRIRQLELQVRTLEADKERLERELSRLRMEMSRLRQPPAFAGNVIEVLDDERAIVQNYNGPRFVVRIAPWIERDKLKPGARVALDQRTMAIVELLPSEKDPSVLGFEVIERPKVTYNDIGGLEKQLQELREAIELPLKHPELFEQVGIEPPKGVLLYGPPGCGKTLMAKAVANHVNATFIRVVGSELVRKFIGEGARLVHELFELAKEKAPTIIFIDEIDAIGAKRMDETTGGEREVNRTLMQLLAEMDGFDPRGNVKVIAATNRPDILDPALLRPGRFDRLIEVPLPDYQGRLEILKVHTRKMNLKGVDLRVIAEITEGASGADLKAIATEAGMFAIRDRRTYVTQDDFLKAVDKVIGSEKRLAQQIAMHEVMYG.

Residues 15 to 58 (DYVTFLKRRIRQLELQVRTLEADKERLERELSRLRMEMSRLRQP) adopt a coiled-coil conformation. ATP contacts are provided by residues 182 to 187 (GCGKTL) and histidine 321. The tract at residues 395 to 397 (MYG) is docks into pockets in the proteasome alpha-ring to cause gate opening.

It belongs to the AAA ATPase family. Homohexamer. The hexameric complex has a two-ring architecture resembling a top hat that caps the 20S proteasome core at one or both ends. Upon ATP-binding, the C-terminus of PAN interacts with the alpha-rings of the proteasome core by binding to the intersubunit pockets.

It is found in the cytoplasm. ATPase which is responsible for recognizing, binding, unfolding and translocation of substrate proteins into the archaeal 20S proteasome core particle. Is essential for opening the gate of the 20S proteasome via an interaction with its C-terminus, thereby allowing substrate entry and access to the site of proteolysis. Thus, the C-termini of the proteasomal ATPase function like a 'key in a lock' to induce gate opening and therefore regulate proteolysis. Unfolding activity requires energy from ATP hydrolysis, whereas ATP binding alone promotes ATPase-20S proteasome association which triggers gate opening, and supports translocation of unfolded substrates. This is Proteasome-activating nucleotidase from Thermococcus kodakarensis (strain ATCC BAA-918 / JCM 12380 / KOD1) (Pyrococcus kodakaraensis (strain KOD1)).